Here is a 581-residue protein sequence, read N- to C-terminus: Laccase-1 (581 aa).

The signal sequence occupies residues 1-25 (MENLGFLIISTFLLLFTTLLPYSSA). Plastocyanin-like domains lie at 34–150 (NVEW…PRQP) and 161–312 (EIPI…YTGK). N-linked (GlcNAc...) asparagine glycosylation occurs at N80. Positions 84, 86, 129, and 131 each coordinate Cu cation. 4 N-linked (GlcNAc...) asparagine glycosylation sites follow: N241, N300, N386, and N403. Positions 429–565 (DFPEKPPNRF…AMGFIVKDGP (137 aa)) constitute a Plastocyanin-like 3 domain. Cu cation contacts are provided by H482, H485, H487, H544, C545, H546, and H550.

The protein belongs to the multicopper oxidase family. Cu cation is required as a cofactor. Expressed in roots, stems and flowers.

The protein localises to the secreted. It is found in the extracellular space. Its subcellular location is the apoplast. It catalyses the reaction 4 hydroquinone + O2 = 4 benzosemiquinone + 2 H2O. Lignin degradation and detoxification of lignin-derived products. The protein is Laccase-1 (LAC1) of Arabidopsis thaliana (Mouse-ear cress).